Reading from the N-terminus, the 334-residue chain is Beta-glucanase (334 aa).

An N-terminal signal peptide occupies residues Met1 to Ala27. In terms of domain architecture, GH16 spans Glu28–Pro248. The Nucleophile role is filled by Glu136. Glu140 functions as the Proton donor in the catalytic mechanism. A disordered region spans residues Gly246–Asn265. One can recognise a Dockerin domain in the interval Asn267 to Leu334.

It belongs to the glycosyl hydrolase 16 family.

The catalysed reaction is Hydrolysis of (1-&gt;4)-beta-D-glucosidic linkages in beta-D-glucans containing (1-&gt;3)- and (1-&gt;4)-bonds.. The chain is Beta-glucanase (licB) from Acetivibrio thermocellus (Hungateiclostridium thermocellum).